We begin with the raw amino-acid sequence, 134 residues long: ATP synthase epsilon chain, chloroplastic (134 aa).

Belongs to the ATPase epsilon chain family. F-type ATPases have 2 components, CF(1) - the catalytic core - and CF(0) - the membrane proton channel. CF(1) has five subunits: alpha(3), beta(3), gamma(1), delta(1), epsilon(1). CF(0) has three main subunits: a, b and c.

It localises to the plastid. The protein resides in the chloroplast thylakoid membrane. Its function is as follows. Produces ATP from ADP in the presence of a proton gradient across the membrane. The sequence is that of ATP synthase epsilon chain, chloroplastic from Porphyra purpurea (Red seaweed).